The sequence spans 334 residues: Aspartate carbamoyltransferase catalytic subunit (334 aa).

Carbamoyl phosphate is bound by residues arginine 71 and threonine 72. Lysine 99 contributes to the L-aspartate binding site. Carbamoyl phosphate contacts are provided by arginine 121, histidine 151, and glutamine 154. The L-aspartate site is built by arginine 184 and arginine 239. Positions 280 and 281 each coordinate carbamoyl phosphate.

It belongs to the aspartate/ornithine carbamoyltransferase superfamily. ATCase family. In terms of assembly, heterododecamer (2C3:3R2) of six catalytic PyrB chains organized as two trimers (C3), and six regulatory PyrI chains organized as three dimers (R2).

The catalysed reaction is carbamoyl phosphate + L-aspartate = N-carbamoyl-L-aspartate + phosphate + H(+). It participates in pyrimidine metabolism; UMP biosynthesis via de novo pathway; (S)-dihydroorotate from bicarbonate: step 2/3. Catalyzes the condensation of carbamoyl phosphate and aspartate to form carbamoyl aspartate and inorganic phosphate, the committed step in the de novo pyrimidine nucleotide biosynthesis pathway. The sequence is that of Aspartate carbamoyltransferase catalytic subunit from Pseudomonas putida (strain GB-1).